The sequence spans 408 residues: Serine/threonine transporter SstT (408 aa).

9 consecutive transmembrane segments (helical) span residues 14–34 (GNLI…GIFS), 43–63 (IFGA…VFIL), 83–103 (IIFL…SISF), 143–163 (ALSS…GFAL), 181–201 (VLKI…GLVA), 219–239 (LIIL…LIVF), 247–269 (YPLI…SSAA), 290–310 (ISIP…IAIL), and 332–352 (VLAA…LLLI).

Belongs to the dicarboxylate/amino acid:cation symporter (DAACS) (TC 2.A.23) family.

It localises to the cell inner membrane. The catalysed reaction is L-serine(in) + Na(+)(in) = L-serine(out) + Na(+)(out). The enzyme catalyses L-threonine(in) + Na(+)(in) = L-threonine(out) + Na(+)(out). Its function is as follows. Involved in the import of serine and threonine into the cell, with the concomitant import of sodium (symport system). The polypeptide is Serine/threonine transporter SstT (Campylobacter lari (strain RM2100 / D67 / ATCC BAA-1060)).